A 259-amino-acid polypeptide reads, in one-letter code: Adenosylcobinamide-GDP ribazoletransferase (259 aa).

Helical transmembrane passes span 9-29, 43-63, 64-84, 118-138, 143-163, and 190-210; these read NLFF…WIEV, LVGL…LYWV, SPSI…GGFH, ALAL…LALF, VSLA…SFIF, and ILLA…ALVL.

Belongs to the CobS family. Mg(2+) is required as a cofactor.

The protein localises to the cell inner membrane. It carries out the reaction alpha-ribazole + adenosylcob(III)inamide-GDP = adenosylcob(III)alamin + GMP + H(+). The catalysed reaction is alpha-ribazole 5'-phosphate + adenosylcob(III)inamide-GDP = adenosylcob(III)alamin 5'-phosphate + GMP + H(+). It participates in cofactor biosynthesis; adenosylcobalamin biosynthesis; adenosylcobalamin from cob(II)yrinate a,c-diamide: step 7/7. Joins adenosylcobinamide-GDP and alpha-ribazole to generate adenosylcobalamin (Ado-cobalamin). Also synthesizes adenosylcobalamin 5'-phosphate from adenosylcobinamide-GDP and alpha-ribazole 5'-phosphate. The polypeptide is Adenosylcobinamide-GDP ribazoletransferase (Shewanella pealeana (strain ATCC 700345 / ANG-SQ1)).